The primary structure comprises 542 residues: CTP synthase (542 aa).

The segment at 1 to 265 (MARYVFITGG…DSEVLSAFGI (265 aa)) is amidoligase domain. Ser-13 is a binding site for CTP. Ser-13 contributes to the UTP binding site. ATP is bound at residue 14–19 (SLGKGI). Position 54 (Tyr-54) interacts with L-glutamine. Position 71 (Asp-71) interacts with ATP. Mg(2+) contacts are provided by Asp-71 and Glu-139. CTP-binding positions include 146–148 (DIE), 186–191 (KTKPTQ), and Lys-222. Residues 186–191 (KTKPTQ) and Lys-222 each bind UTP. Residues 291 to 541 (TIAVVGKYTG…IEAAIEQSRL (251 aa)) enclose the Glutamine amidotransferase type-1 domain. Residue Gly-353 participates in L-glutamine binding. Catalysis depends on Cys-380, which acts as the Nucleophile; for glutamine hydrolysis. L-glutamine contacts are provided by residues 381-384 (FGMQ), Glu-404, and Arg-469. Active-site residues include His-514 and Glu-516.

This sequence belongs to the CTP synthase family. As to quaternary structure, homotetramer.

The catalysed reaction is UTP + L-glutamine + ATP + H2O = CTP + L-glutamate + ADP + phosphate + 2 H(+). It catalyses the reaction L-glutamine + H2O = L-glutamate + NH4(+). It carries out the reaction UTP + NH4(+) + ATP = CTP + ADP + phosphate + 2 H(+). Its pathway is pyrimidine metabolism; CTP biosynthesis via de novo pathway; CTP from UDP: step 2/2. Its activity is regulated as follows. Allosterically activated by GTP, when glutamine is the substrate; GTP has no effect on the reaction when ammonia is the substrate. The allosteric effector GTP functions by stabilizing the protein conformation that binds the tetrahedral intermediate(s) formed during glutamine hydrolysis. Inhibited by the product CTP, via allosteric rather than competitive inhibition. Functionally, catalyzes the ATP-dependent amination of UTP to CTP with either L-glutamine or ammonia as the source of nitrogen. Regulates intracellular CTP levels through interactions with the four ribonucleotide triphosphates. The protein is CTP synthase of Brucella canis (strain ATCC 23365 / NCTC 10854 / RM-666).